The primary structure comprises 634 residues: MAEEQEFTQLCKLPAQPSHPHCVNNTYRSAQHSQALLRGLLALRDSGILFDVVLVVEGRHIEAHRILLAASCDYFRGMFAGGLKEMEQEEVLIHGVSYNAMCQILHFIYTSELELSLSNVQETLVAACQLQIPEIIHFCCDFLMSWVDEENILDVYRLAELFDLSRLTEQLDTYILKNFVAFSRTDKYRQLPLEKVYSLLSSNRLEVSCETEVYEGALLYHYSLEQVQADQISLHEPPKLLETVRFPLMEAEVLQRLHDKLDPSPLRDTVASALMYHRNESLQPSLQSPQTELRSDFQCVVGFGGIHSTPSTVLSDQAKYLNPLLGEWKHFTASLAPRMSNQGIAVLNNFVYLIGGDNNVQGFRAESRCWRYDPRHNRWFQIQSLQQEHADLSVCVVGRYIYAVAGRDYHNDLNAVERYDPATNSWAYVAPLKREVYAHAGATLEGKMYITCGRRGEDYLKETHCYDPGSNTWHTLADGPVRRAWHGMATLLNKLYVIGGSNNDAGYRRDVHQVACYSCTSGQWSSVCPLPAGHGEPGIAVLDNRIYVLGGRSHNRGSRTGYVHIYDVEKDCWEEGPQLDNSISGLAACVLTLPRSLLLEPPRGTPDRSQADPDFASEVMSVSDWEEFDNSSED.

A2 carries the N-acetylalanine modification. The BTB domain maps to 50–117; sequence FDVVLVVEGR…IYTSELELSL (68 aa). 6 Kelch repeats span residues 299–349, 350–399, 400–446, 448–493, 494–544, and 545–593; these read CVVG…VLNN, FVYL…VVGR, YIYA…TLEG, MYIT…TLLN, KLYV…VLDN, and RIYV…VLTL. The residue at position 463 (T463) is a Phosphothreonine. Y466 carries the phosphotyrosine modification. Position 475 is a phosphothreonine (T475). The disordered stretch occupies residues 600–634; it reads EPPRGTPDRSQADPDFASEVMSVSDWEEFDNSSED. Phosphothreonine is present on T605. Residues 624 to 634 show a composition bias toward acidic residues; that stretch reads DWEEFDNSSED.

As to quaternary structure, component of the BCR(KLHL22) E3 ubiquitin ligase complex, at least composed of CUL3, KLHL22 and RBX1. Interacts with PLK1. Interacts with DEPDC5 (via DEP domain); the interaction depends on amino acid availability. Interacts with YWHAE; required for the nuclear localization of KLHL22 upon amino acid starvation.

Its subcellular location is the cytoplasm. It is found in the cytosol. The protein resides in the cytoskeleton. It localises to the microtubule organizing center. The protein localises to the centrosome. Its subcellular location is the spindle. It is found in the nucleus. The protein resides in the lysosome. It functions in the pathway protein modification; protein ubiquitination. Substrate-specific adapter of a BCR (BTB-CUL3-RBX1) E3 ubiquitin ligase complex required for chromosome alignment and localization of PLK1 at kinetochores. The BCR(KLHL22) ubiquitin ligase complex mediates monoubiquitination of PLK1, leading to PLK1 dissociation from phosphoreceptor proteins and subsequent removal from kinetochores, allowing silencing of the spindle assembly checkpoint (SAC) and chromosome segregation. Monoubiquitination of PLK1 does not lead to PLK1 degradation. The BCR(KLHL22) ubiquitin ligase complex is also responsible for the amino acid-stimulated 'Lys-48' polyubiquitination and proteasomal degradation of DEPDC5. Through the degradation of DEPDC5, releases the GATOR1 complex-mediated inhibition of the TORC1 pathway. It is therefore an amino acid-dependent activator within the amino acid-sensing branch of the TORC1 pathway, indirectly regulating different cellular processes including cell growth and autophagy. This is Kelch-like protein 22 from Homo sapiens (Human).